Reading from the N-terminus, the 482-residue chain is MDELVHDLASALEQTSEQSKLGELWEEMALSPRQQRRQLRKRRGRKRRSDFTHLAEHACCFSEASESSLDEATKDCREVAPLTNFSDSDDTVVAKRHPALSAIIRGKQHSWPESDSFTENAPCRPLRRRRKVKRVTSEVAASLQQKLKVSDWSYERGCRFKSAKKQRLSRWKENTPWTSSGHGLCESAENRTFLSQPGRKERMECEAEEQKHGSDENMSECDTSSVCSSSDTGLFTNDEGRQGDDEQSDWFYEGECVPGFTVHNLLPKWAPDHCTEVERMDSGLDKLSDPTFLLPSRPAQRGYHGRLNRLPGAAARCLRKGRRRLPGKEASMSSLGTERIGHTISDPRQTDFWLPSAGKRERNQFNPLSPLYSLDVLADASHRRCSPAHCSARQASVHWGPPCPRDIKRKRKPVASASFSSPSPVHPDVLEPAIPAQKPPDSEWLDGTSAAEKATAFPPATFFKMPQEKNSGCSSSPGTNGC.

3 positions are modified to phosphoserine: S31, S86, and S88. At T91 the chain carries Phosphothreonine. Disordered stretches follow at residues 195–222 and 408–482; these read SQPG…SECD and KRKR…TNGC. The segment covering 198–215 has biased composition (basic and acidic residues); the sequence is GRKERMECEAEEQKHGSD. Low complexity predominate over residues 414-427; the sequence is VASASFSSPSPVHP. Residues 468–482 are compositionally biased toward polar residues; the sequence is EKNSGCSSSPGTNGC.

The sequence is that of G patch domain-containing protein 2-like (Gpatch2l) from Mus musculus (Mouse).